The following is a 223-amino-acid chain: Holliday junction branch migration complex subunit RuvA (223 aa).

The segment at 1 to 64 (MIGRIAGVIL…EDLLQLFGFP (64 aa)) is domain I. The domain II stretch occupies residues 65–143 (TLLEKEWHRL…AVMALGGALT (79 aa)). A flexible linker region spans residues 144 to 169 (VDPGPLPEVELVEAAVPAPVPAKAAP). A domain III region spans residues 170-223 (SSAQATADALSALGNLGYAPSEAASAVAEAAAREPAAPTAALIRAALRLLAPKE).

This sequence belongs to the RuvA family. Homotetramer. Forms an RuvA(8)-RuvB(12)-Holliday junction (HJ) complex. HJ DNA is sandwiched between 2 RuvA tetramers; dsDNA enters through RuvA and exits via RuvB. An RuvB hexamer assembles on each DNA strand where it exits the tetramer. Each RuvB hexamer is contacted by two RuvA subunits (via domain III) on 2 adjacent RuvB subunits; this complex drives branch migration. In the full resolvosome a probable DNA-RuvA(4)-RuvB(12)-RuvC(2) complex forms which resolves the HJ.

It is found in the cytoplasm. The RuvA-RuvB-RuvC complex processes Holliday junction (HJ) DNA during genetic recombination and DNA repair, while the RuvA-RuvB complex plays an important role in the rescue of blocked DNA replication forks via replication fork reversal (RFR). RuvA specifically binds to HJ cruciform DNA, conferring on it an open structure. The RuvB hexamer acts as an ATP-dependent pump, pulling dsDNA into and through the RuvAB complex. HJ branch migration allows RuvC to scan DNA until it finds its consensus sequence, where it cleaves and resolves the cruciform DNA. This is Holliday junction branch migration complex subunit RuvA from Paracoccus denitrificans (strain Pd 1222).